The following is a 383-amino-acid chain: L-lactate dehydrogenase (383 aa).

Residues 1 to 380 (MIISSGNDYR…NTDCLVQAIK (380 aa)) enclose the FMN hydroxy acid dehydrogenase domain. Position 24 (Y24) interacts with substrate. 2 residues coordinate FMN: S106 and Q127. Residue Y129 coordinates substrate. Position 155 (T155) interacts with FMN. R164 contacts substrate. K251 lines the FMN pocket. The active-site Proton acceptor is the H275. R278 lines the substrate pocket. 306-330 (DSGIRNGLDVVRMLALGADTVLLGR) is a binding site for FMN.

This sequence belongs to the FMN-dependent alpha-hydroxy acid dehydrogenase family. Requires FMN as cofactor.

It localises to the cell inner membrane. It catalyses the reaction (S)-lactate + A = pyruvate + AH2. In terms of biological role, catalyzes the conversion of L-lactate to pyruvate. Is coupled to the respiratory chain. The chain is L-lactate dehydrogenase from Acinetobacter baumannii (strain SDF).